A 1259-amino-acid polypeptide reads, in one-letter code: Translocation and assembly module subunit TamB (1259 aa).

N-formylmethionine is present on M1. The Cytoplasmic portion of the chain corresponds to 1 to 6 (MSLWKK). Residues 7–27 (ISLGVVIVILLLLGSVAFLVG) form a helical; Signal-anchor for type II membrane protein membrane-spanning segment. The Periplasmic portion of the chain corresponds to 28–1259 (TTSGLHLVFK…ALDLLYQFEF (1232 aa)).

The protein belongs to the TamB family. Interacts with TamA to form the translocation and assembly module (TAM).

The protein localises to the cell inner membrane. Its function is as follows. Component of the translocation and assembly module (TAM), which facilitates the insertion and assembly of specific beta-barrel proteins into the outer membrane. Promotes the assembly and secretion across the outer membrane of a subset of autotransporters, such as Ag43. Involved in the assembly of the outer membrane usher protein FimD. In vitro, when TAM is reconstituted into preformed liposomes, it can promote the assembly of several outer membrane proteins, including OmpA, EspP, Ag43 and FadL. TamA is sufficient to catalyze a low level of outer membrane protein (OMP) assembly, but both TamA and TamB are required for efficient OMP assembly. TamB may regulate TamA activity. It could regulate conformational changes in TamA to drive its function in OMP assembly. It could also act as a chaperone that facilitate the transport of nascent membrane proteins across the periplasm to TamA in the outer membrane. In addition, is involved in outer membrane lipid homeostasis. Likely transports phospholipids between the inner membrane and the outer membrane. It would provide a bridge-like structure that protects phospholipids as they travel across the periplasm. One possible explanation for the apparent dual function of TAM is that TamB is a somewhat generic transporter of hydrophobic molecules. In terms of biological role, tamB, YdbH and YhdP are redundant, but not equivalent, in performing an essential function for growth and maintaining lipid homeostasis in the outer membrane. The transport functions of TamB and YhdP could be differentiated according to the fatty acid saturation state of the phospholipids, with TamB transporting more unsaturated phospholipids and YhdP more saturated phospholipids. Any of these three proteins is sufficient for growth. The sequence is that of Translocation and assembly module subunit TamB from Escherichia coli (strain K12).